The sequence spans 239 residues: Serine protease SplC (239 aa).

The signal sequence occupies residues 1–36; the sequence is MNKNIVIKSMAALAILTSVTGINAAVVEETQQIANA. Catalysis depends on charge relay system residues His-75, Asp-113, and Ser-193.

The protein belongs to the peptidase S1B family.

It localises to the secreted. The sequence is that of Serine protease SplC (splC) from Staphylococcus aureus.